Consider the following 185-residue polypeptide: Ribosome-recycling factor (185 aa).

It belongs to the RRF family.

The protein resides in the cytoplasm. Responsible for the release of ribosomes from messenger RNA at the termination of protein biosynthesis. May increase the efficiency of translation by recycling ribosomes from one round of translation to another. In Desulforapulum autotrophicum (strain ATCC 43914 / DSM 3382 / VKM B-1955 / HRM2) (Desulfobacterium autotrophicum), this protein is Ribosome-recycling factor.